A 276-amino-acid chain; its full sequence is Probable ABC transporter permease protein PH1036 (276 aa).

6 helical membrane passes run 12-32 (IAWSIGIAWLIPFMGVLMASV), 75-95 (IVAIPSTIVPVIVASLAAYAF), 109-129 (FIVLLMALPQQMTVVPLYFLL), 137-157 (TFRGLIIVHSAWGLAWIIFFM), 186-206 (IVLPMALPGLISASILQFTWV), and 241-261 (GLLTAASIMVMLVPLLVYALF). One can recognise an ABC transmembrane type-1 domain in the interval 70 to 261 (LKNSLIVAIP…LVPLLVYALF (192 aa)).

The protein belongs to the binding-protein-dependent transport system permease family. MalFG subfamily.

It localises to the cell membrane. Probably part of a binding-protein-dependent transport system PH1036/38/39. Probably responsible for the translocation of the substrate across the membrane. This Pyrococcus horikoshii (strain ATCC 700860 / DSM 12428 / JCM 9974 / NBRC 100139 / OT-3) protein is Probable ABC transporter permease protein PH1036.